The sequence spans 105 residues: Putative membrane protein insertion efficiency factor (105 aa).

This sequence belongs to the UPF0161 family.

It localises to the cell inner membrane. In terms of biological role, could be involved in insertion of integral membrane proteins into the membrane. This Nitratidesulfovibrio vulgaris (strain DSM 19637 / Miyazaki F) (Desulfovibrio vulgaris) protein is Putative membrane protein insertion efficiency factor.